Reading from the N-terminus, the 249-residue chain is Ribosomal RNA small subunit methyltransferase J (249 aa).

Asp-169 provides a ligand contact to S-adenosyl-L-methionine.

It belongs to the methyltransferase superfamily. RsmJ family.

It is found in the cytoplasm. It catalyses the reaction guanosine(1516) in 16S rRNA + S-adenosyl-L-methionine = N(2)-methylguanosine(1516) in 16S rRNA + S-adenosyl-L-homocysteine + H(+). Specifically methylates the guanosine in position 1516 of 16S rRNA. The sequence is that of Ribosomal RNA small subunit methyltransferase J from Buchnera aphidicola subsp. Schizaphis graminum (strain Sg).